Reading from the N-terminus, the 235-residue chain is Large ribosomal subunit protein uL1 (235 aa).

It belongs to the universal ribosomal protein uL1 family. In terms of assembly, part of the 50S ribosomal subunit.

Binds directly to 23S rRNA. The L1 stalk is quite mobile in the ribosome, and is involved in E site tRNA release. In terms of biological role, protein L1 is also a translational repressor protein, it controls the translation of the L11 operon by binding to its mRNA. The sequence is that of Large ribosomal subunit protein uL1 from Desulfotalea psychrophila (strain LSv54 / DSM 12343).